Here is a 143-residue protein sequence, read N- to C-terminus: Large ribosomal subunit protein uL11 (143 aa).

This sequence belongs to the universal ribosomal protein uL11 family. In terms of assembly, part of the ribosomal stalk of the 50S ribosomal subunit. Interacts with L10 and the large rRNA to form the base of the stalk. L10 forms an elongated spine to which L12 dimers bind in a sequential fashion forming a multimeric L10(L12)X complex. Post-translationally, one or more lysine residues are methylated.

Functionally, forms part of the ribosomal stalk which helps the ribosome interact with GTP-bound translation factors. In Caulobacter vibrioides (strain ATCC 19089 / CIP 103742 / CB 15) (Caulobacter crescentus), this protein is Large ribosomal subunit protein uL11.